Reading from the N-terminus, the 391-residue chain is RAB6A-GEF complex partner protein 2 (391 aa).

It belongs to the RGP1 family. In terms of assembly, forms a complex with RIC1; the interaction enhances RAB6A GTPase activity. Interacts with RIC1. Interacts with RAB6A; the interaction is direct with a preference for RAB6A-GDP. Interacts with RAB33B.

The protein resides in the cytoplasm. Its subcellular location is the cytosol. It is found in the membrane. Functionally, the RIC1-RGP1 complex acts as a guanine nucleotide exchange factor (GEF), which activates RAB6A by exchanging bound GDP for free GTP and may thereby required for efficient fusion of endosome-derived vesicles with the Golgi compartment. The RIC1-RGP1 complex participates in the recycling of mannose-6-phosphate receptors. This Homo sapiens (Human) protein is RAB6A-GEF complex partner protein 2.